A 325-amino-acid chain; its full sequence is Sulfite dehydrogenase subunit C (325 aa).

The next 8 helical transmembrane spans lie at 5 to 25 (FSVI…LAMV), 43 to 63 (FYAV…GASF), 87 to 107 (EVIV…AHWF), 126 to 146 (LLLG…TAMI), 165 to 185 (FLFL…AYIG), 186 to 206 (NPLV…GLAS), 266 to 286 (VYLV…YLIG), and 290 to 310 (LPII…WSFF).

This sequence belongs to the DmsC family. In terms of assembly, forms a heterotrimeric membrane-bound complex composed of a catalytic heterodimer (SoeAB) and a membrane anchor protein (SoeC).

It localises to the cell inner membrane. In terms of biological role, part of the SoeABC complex that catalyzes the oxidation of sulfite to sulfate. SoeC probably anchors and stabilizes the catalytic subunits. This is Sulfite dehydrogenase subunit C from Allochromatium vinosum (strain ATCC 17899 / DSM 180 / NBRC 103801 / NCIMB 10441 / D) (Chromatium vinosum).